The chain runs to 271 residues: Type III pantothenate kinase (271 aa).

Residue 6–13 participates in ATP binding; the sequence is DVRNTHTV. Position 109 to 112 (109 to 112) interacts with substrate; that stretch reads GADR. Catalysis depends on Asp-111, which acts as the Proton acceptor. Asp-131 is a K(+) binding site. Ser-134 contacts ATP. Thr-186 lines the substrate pocket.

Belongs to the type III pantothenate kinase family. In terms of assembly, homodimer. NH4(+) is required as a cofactor. Requires K(+) as cofactor.

It is found in the cytoplasm. The catalysed reaction is (R)-pantothenate + ATP = (R)-4'-phosphopantothenate + ADP + H(+). Its pathway is cofactor biosynthesis; coenzyme A biosynthesis; CoA from (R)-pantothenate: step 1/5. Functionally, catalyzes the phosphorylation of pantothenate (Pan), the first step in CoA biosynthesis. In Mycobacteroides abscessus (strain ATCC 19977 / DSM 44196 / CCUG 20993 / CIP 104536 / JCM 13569 / NCTC 13031 / TMC 1543 / L948) (Mycobacterium abscessus), this protein is Type III pantothenate kinase.